The sequence spans 385 residues: S-adenosylmethionine synthase (385 aa).

His-16 provides a ligand contact to ATP. Asp-18 serves as a coordination point for Mg(2+). Glu-44 provides a ligand contact to K(+). Positions 57 and 100 each coordinate L-methionine. The segment at 100–110 (QSPDINQGVDR) is flexible loop. ATP-binding positions include 164–166 (DGK), 230–231 (KF), Asp-239, 245–246 (RK), Ala-262, and Lys-266. Asp-239 provides a ligand contact to L-methionine. Lys-270 contributes to the L-methionine binding site.

It belongs to the AdoMet synthase family. As to quaternary structure, homotetramer; dimer of dimers. Mg(2+) serves as cofactor. Requires K(+) as cofactor.

It localises to the cytoplasm. It catalyses the reaction L-methionine + ATP + H2O = S-adenosyl-L-methionine + phosphate + diphosphate. It functions in the pathway amino-acid biosynthesis; S-adenosyl-L-methionine biosynthesis; S-adenosyl-L-methionine from L-methionine: step 1/1. Catalyzes the formation of S-adenosylmethionine (AdoMet) from methionine and ATP. The overall synthetic reaction is composed of two sequential steps, AdoMet formation and the subsequent tripolyphosphate hydrolysis which occurs prior to release of AdoMet from the enzyme. The polypeptide is S-adenosylmethionine synthase (Helicobacter pylori (strain ATCC 700392 / 26695) (Campylobacter pylori)).